Reading from the N-terminus, the 132-residue chain is L-ectoine synthase (132 aa).

It belongs to the ectoine synthase family.

The enzyme catalyses (2S)-4-acetamido-2-aminobutanoate = L-ectoine + H2O. It functions in the pathway amine and polyamine biosynthesis; ectoine biosynthesis; L-ectoine from L-aspartate 4-semialdehyde: step 3/3. Its function is as follows. Catalyzes the circularization of gamma-N-acetyl-alpha,gamma-diaminobutyric acid (ADABA) to ectoine (1,4,5,6-tetrahydro-2-methyl-4-pyrimidine carboxylic acid), which is an excellent osmoprotectant. This Alkalilimnicola ehrlichii (strain ATCC BAA-1101 / DSM 17681 / MLHE-1) protein is L-ectoine synthase.